The sequence spans 255 residues: 7alpha-hydroxysteroid dehydrogenase (255 aa).

NAD(+) is bound by residues I23, 42–43 (DI), 68–69 (DI), and N95. Residues G99, S146, N151, and Y159 each coordinate glycochenodeoxycholate. Residues Y159, K163, and 192-194 (ILT) each bind NAD(+). The Proton acceptor role is filled by Y159.

Belongs to the short-chain dehydrogenases/reductases (SDR) family. As to quaternary structure, homotetramer.

The enzyme catalyses cholate + NAD(+) = 3alpha,12alpha-dihydroxy-7-oxo-5beta-cholanate + NADH + H(+). It catalyses the reaction chenodeoxycholate + NAD(+) = 7-oxolithocholate + NADH + H(+). The catalysed reaction is taurochenodeoxycholate + NAD(+) = 7-oxotaurolithocholate + NADH + H(+). It carries out the reaction taurocholate + NAD(+) = 7-oxo-taurodeoxycholate + NADH + H(+). The enzyme catalyses glycocholate + NAD(+) = 7-oxo-glycodeoxycholate + NADH + H(+). It catalyses the reaction glycochenodeoxycholate + NAD(+) = 7-oxoglycolithocholate + NADH + H(+). Functionally, 7alpha-hydroxysteroid dehydrogenase involved in the metabolism of bile acids. Catalyzes the NAD(+)-dependent oxidation of the 7alpha-hydroxy group of 7alpha-hydroxysteroids, such as the major human bile acids cholate and chenodeoxycholate, to the corresponding 7-oxosteroids. To a lesser extent, can also act on taurochenodeoxycholate, taurocholate and glycocholate. Can also use glycochenodeoxycholate as substrate. Is not able to use NADP(+) instead of NAD(+) as the electron acceptor. This chain is 7alpha-hydroxysteroid dehydrogenase (hdhA), found in Escherichia coli O157:H7.